The following is a 261-amino-acid chain: ATP synthase subunit a (261 aa).

The next 6 helical transmembrane spans lie at 45 to 65, 107 to 127, 133 to 153, 162 to 182, 209 to 229, and 232 to 252; these read ITNV…ILVL, VMTL…PLSF, MAVT…LGFM, MFWV…IEVI, IAGF…VTAI, and LELL…CVYL.

It belongs to the ATPase A chain family. F-type ATPases have 2 components, CF(1) - the catalytic core - and CF(0) - the membrane proton channel. CF(1) has five subunits: alpha(3), beta(3), gamma(1), delta(1), epsilon(1). CF(0) has four main subunits: a, b, b' and c.

Its subcellular location is the cell inner membrane. Functionally, key component of the proton channel; it plays a direct role in the translocation of protons across the membrane. This chain is ATP synthase subunit a, found in Cereibacter sphaeroides (strain ATCC 17025 / ATH 2.4.3) (Rhodobacter sphaeroides).